The chain runs to 46 residues: Protein PsbN (46 aa).

The chain crosses the membrane as a helical span at residues 10-30; it reads VAIAVLAALLGLTGFGVYTAF.

The protein belongs to the PsbN family.

Its subcellular location is the cellular thylakoid membrane. In terms of biological role, may play a role in photosystem I and II biogenesis. This Synechococcus sp. (strain CC9311) protein is Protein PsbN.